A 750-amino-acid chain; its full sequence is Photosystem I P700 chlorophyll a apoprotein A1 (750 aa).

8 consecutive transmembrane segments (helical) span residues 70–93, 156–179, 195–219, 291–309, 346–369, 385–411, 433–455, and 531–549; these read VFSAHFGQLSIIFLWLSGMYFHGA, LYCTAIGALVFAALMLFAGWFHYH, LNHHLTGLLGLGSLSWAGHQIHVSL, IIHHHLAIAILFLIAGHMY, WHAQLSINLAMLGSLTIVVAHHMY, LSLFTHHMWIGGFLIVGAAAHAAIFMV, AIISHLNWVCIFLGFHSFGLYIH, and FLVHHIHAFTIHVTVLILL. 2 residues coordinate [4Fe-4S] cluster: Cys573 and Cys582. A run of 2 helical transmembrane segments spans residues 589 to 610 and 664 to 686; these read HVFLGLFWMYNSISVVIFHFSW and LSAYGLFFLGAHFVWAFSLMFLF. His675 contacts chlorophyll a'. Residues Met683 and Tyr691 each coordinate chlorophyll a. Trp692 provides a ligand contact to phylloquinone. The helical transmembrane segment at 724-744 threads the bilayer; sequence AVGVTHYLLGGIATTWAFFLA.

Belongs to the PsaA/PsaB family. The PsaA/B heterodimer binds the P700 chlorophyll special pair and subsequent electron acceptors. PSI consists of a core antenna complex that captures photons, and an electron transfer chain that converts photonic excitation into a charge separation. The eukaryotic PSI reaction center is composed of at least 11 subunits. The cofactor is P700 is a chlorophyll a/chlorophyll a' dimer, A0 is one or more chlorophyll a, A1 is one or both phylloquinones and FX is a shared 4Fe-4S iron-sulfur center..

Its subcellular location is the plastid. The protein localises to the chloroplast thylakoid membrane. The catalysed reaction is reduced [plastocyanin] + hnu + oxidized [2Fe-2S]-[ferredoxin] = oxidized [plastocyanin] + reduced [2Fe-2S]-[ferredoxin]. PsaA and PsaB bind P700, the primary electron donor of photosystem I (PSI), as well as the electron acceptors A0, A1 and FX. PSI is a plastocyanin-ferredoxin oxidoreductase, converting photonic excitation into a charge separation, which transfers an electron from the donor P700 chlorophyll pair to the spectroscopically characterized acceptors A0, A1, FX, FA and FB in turn. Oxidized P700 is reduced on the lumenal side of the thylakoid membrane by plastocyanin. The protein is Photosystem I P700 chlorophyll a apoprotein A1 of Phaseolus vulgaris (Kidney bean).